The primary structure comprises 591 residues: Putative F-box protein At1g32140 (591 aa).

The region spanning 2–49 is the F-box domain; sequence TMMSDLSLDLVEEILCRVPITSLKAVRSSCKLWNVLSKNRILCKTEAR. A compositionally biased stretch (basic residues) spans 567–581; sequence AGRKRKEKKTKRKSK. The tract at residues 567–591 is disordered; it reads AGRKRKEKKTKRKSKDKQMKLSNKV.

The polypeptide is Putative F-box protein At1g32140 (Arabidopsis thaliana (Mouse-ear cress)).